A 177-amino-acid polypeptide reads, in one-letter code: MSRVAKAPVVIPAGVEVKLNGQVISIKGKNGELTRTIHEAVDVQHADNQLSFAPREGHANGWALAGTTRALLNGMVIGVTDGFTKKLQLVGVGYRAAVKGNVVNLSLGFSHPIDHQLPAGITAECPSQTEIVLKGADKQIIGQVAADLRAYRRPEPYKGKGVRYADEVVRTKEAKKK.

This sequence belongs to the universal ribosomal protein uL6 family. Part of the 50S ribosomal subunit.

Its function is as follows. This protein binds to the 23S rRNA, and is important in its secondary structure. It is located near the subunit interface in the base of the L7/L12 stalk, and near the tRNA binding site of the peptidyltransferase center. This Sodalis glossinidius (strain morsitans) protein is Large ribosomal subunit protein uL6.